Reading from the N-terminus, the 325-residue chain is MSWLSPELIEILLTILKAVVILLVVVTCGAFMSFGERRLLGLFQNRYGPNRVGWGGSLQLVADMIKMFFKEDWIPKFSDRVIFTLAPMIAFTSLLLAFAIVPVSPGWVVADLNIGILFFLMMAGLAVYAVLFAGWSSNNKYSLLGAMRASAQTLSYEVFLGLSLMGVVAQAGSFNMTDIVNSQAHVWNVIPQFFGFITFAIAGVAVCHRHPFDQPEAEQELADGYHIEYSGMKFGLFFVGEYIGIVTISALMVTLFFGGWQGPFLPPFIWFALKTAFFMMMFILIRASLPRPRYDQVMSFGWKICLPLTLINLLVTAAVILWQAQ.

8 consecutive transmembrane segments (helical) span residues 11 to 31, 81 to 101, 114 to 134, 154 to 174, 186 to 206, 237 to 257, 265 to 285, and 304 to 324; these read ILLTILKAVVILLVVVTCGAF, VIFTLAPMIAFTSLLLAFAIV, IGILFFLMMAGLAVYAVLFAG, LSYEVFLGLSLMGVVAQAGSF, VWNVIPQFFGFITFAIAGVAV, FFVGEYIGIVTISALMVTLFF, LPPFIWFALKTAFFMMMFILI, and ICLPLTLINLLVTAAVILWQA.

It belongs to the complex I subunit 1 family. In terms of assembly, NDH-1 is composed of 13 different subunits. Subunits NuoA, H, J, K, L, M, N constitute the membrane sector of the complex.

The protein resides in the cell inner membrane. It catalyses the reaction a quinone + NADH + 5 H(+)(in) = a quinol + NAD(+) + 4 H(+)(out). Functionally, NDH-1 shuttles electrons from NADH, via FMN and iron-sulfur (Fe-S) centers, to quinones in the respiratory chain. The immediate electron acceptor for the enzyme in this species is believed to be ubiquinone. Couples the redox reaction to proton translocation (for every two electrons transferred, four hydrogen ions are translocated across the cytoplasmic membrane), and thus conserves the redox energy in a proton gradient. This subunit may bind ubiquinone. The chain is NADH-quinone oxidoreductase subunit H from Escherichia fergusonii (strain ATCC 35469 / DSM 13698 / CCUG 18766 / IAM 14443 / JCM 21226 / LMG 7866 / NBRC 102419 / NCTC 12128 / CDC 0568-73).